Reading from the N-terminus, the 158-residue chain is Putative ribosomal RNA large subunit methyltransferase H (158 aa).

Residues Leu76, Gly107, and 126–131 each bind S-adenosyl-L-methionine; that span reads LSRMTF.

The protein belongs to the RNA methyltransferase RlmH family.

The protein resides in the cytoplasm. It carries out the reaction pseudouridine(1915) in 23S rRNA + S-adenosyl-L-methionine = N(3)-methylpseudouridine(1915) in 23S rRNA + S-adenosyl-L-homocysteine + H(+). In terms of biological role, specifically methylates the pseudouridine at position 1915 (m3Psi1915) in 23S rRNA. This is Putative ribosomal RNA large subunit methyltransferase H from Methanocorpusculum labreanum (strain ATCC 43576 / DSM 4855 / Z).